Reading from the N-terminus, the 377-residue chain is MKFELDTTQGRARRGRLVFERGTVETPAFMPVGTYGTVKGMTPEEVRETGADILLGNTFHLWLRPGEEIMRKHGDLHDFMNWQRPILTDSGGFQVFSLGDIRKITEEGVHFRSPINGEKIFLDPEKSMQIQDSLGSDVVMIFDECTPYPATEDEARKSMQMSLRWAQRSRDEFDRLENPNSLFGIIQGGVYEGLRDESLKGLVDIGFDGYAVGGLAVGEPKEDMHRILEHTCPQIPADKPRYLMGVGKPEDLVEGVRRGVDMFDCVMPTRNARNGHLFTSEGVVKIRNARHRDDTSTLDDKCDCYTCKNYSRAYLYHLDRCNEILGARLNTIHNLRYYQRLMEGLRGAIETGTLDDFVTEFYTSQGREVPEVPELTD.

Catalysis depends on aspartate 89, which acts as the Proton acceptor. Substrate is bound by residues 89–93 (DSGGF), aspartate 143, glutamine 187, and glycine 214. Positions 245–251 (GVGKPED) are RNA binding. Aspartate 264 (nucleophile) is an active-site residue. Residues 269–273 (TRNAR) form an RNA binding; important for wobble base 34 recognition region. Zn(2+) is bound by residues cysteine 302, cysteine 304, cysteine 307, and histidine 333.

The protein belongs to the queuine tRNA-ribosyltransferase family. Homodimer. Within each dimer, one monomer is responsible for RNA recognition and catalysis, while the other monomer binds to the replacement base PreQ1. Zn(2+) serves as cofactor.

The catalysed reaction is 7-aminomethyl-7-carbaguanine + guanosine(34) in tRNA = 7-aminomethyl-7-carbaguanosine(34) in tRNA + guanine. It functions in the pathway tRNA modification; tRNA-queuosine biosynthesis. Its function is as follows. Catalyzes the base-exchange of a guanine (G) residue with the queuine precursor 7-aminomethyl-7-deazaguanine (PreQ1) at position 34 (anticodon wobble position) in tRNAs with GU(N) anticodons (tRNA-Asp, -Asn, -His and -Tyr). Catalysis occurs through a double-displacement mechanism. The nucleophile active site attacks the C1' of nucleotide 34 to detach the guanine base from the RNA, forming a covalent enzyme-RNA intermediate. The proton acceptor active site deprotonates the incoming PreQ1, allowing a nucleophilic attack on the C1' of the ribose to form the product. After dissociation, two additional enzymatic reactions on the tRNA convert PreQ1 to queuine (Q), resulting in the hypermodified nucleoside queuosine (7-(((4,5-cis-dihydroxy-2-cyclopenten-1-yl)amino)methyl)-7-deazaguanosine). The protein is Queuine tRNA-ribosyltransferase of Shewanella piezotolerans (strain WP3 / JCM 13877).